We begin with the raw amino-acid sequence, 237 residues long: Putative anti-FlhC(2)FlhD(4) factor YdiV (237 aa).

The 237-residue stretch at 1–237 folds into the EAL domain; sequence MKIFLENLYH…INQITTLVQR (237 aa).

Belongs to the YdiV family.

In terms of biological role, upon overexpression acts as a novel anti-FlhC(2)FlhD(4) factor, decreasing its DNA-binding activity, able to negatively regulate expression of flagellar class II operons including FliC. The protein is Putative anti-FlhC(2)FlhD(4) factor YdiV (ydiV) of Escherichia coli (strain K12).